The chain runs to 37 residues: SCIKIGEDCDGDKDDCQCCRTNGYCSXYXLFGYLKSG.

This sequence belongs to the neurotoxin 04 (omega-agtx) family. 03 (type II/III omega-agtx) subfamily. In terms of processing, disulfide bonds are present. Expressed by the venom gland.

It is found in the secreted. Its function is as follows. Omega-agatoxins are antagonists of voltage-gated calcium channels. This toxin blocks calcium channels in insect central neurons but not at peripheral neuromuscular junctions. In vertebrates, it is broadly active against all high-threshold Cav1/CACNA1 channels and Cav2.2/CACNA1B channels. The sequence is that of Omega-agatoxin-Aa3d from Agelenopsis aperta (North American funnel-web spider).